A 184-amino-acid polypeptide reads, in one-letter code: Helix-loop-helix protein ngn-1 (184 aa).

Residues 1–55 (MYHHSPFYPHHLQTGEQDLDMERENDMDQNSKNSTQKPVKREKRRYRCRKRSPAT) form a disordered region. Polar residues predominate over residues 28–37 (DQNSKNSTQK). Positions 38–52 (PVKREKRRYRCRKRS) are enriched in basic residues. Residues 62-75 (VRRDKANARERRRM) are basic motif. Residues 62–114 (VRRDKANARERRRMNSLNDALEHLRGILPALPDEPKMTKIETLRKAQEYIASL) enclose the bHLH domain. Residues 76–114 (NSLNDALEHLRGILPALPDEPKMTKIETLRKAQEYIASL) form a helix-loop-helix motif region. Residues 164-184 (SNPPSQMYYHHHHQSPSFPHH) form a disordered region. The segment covering 172-184 (YHHHHQSPSFPHH) has biased composition (basic residues).

In terms of assembly, interacts with hlh-2; the interaction is direct.

It localises to the nucleus. Functionally, acts as a transcriptional regulator. Regulates expression of various genes, including homeobox protein unc-42 and helix-loop-helix protein hlh-34. Required for embryonic viability, neuromuscular development, organization of the nerve ring and neuronal cell body location. Regulates AIY neuron axon morphology and cell fate. Plays a role in cell autonomously establishing a neuronal left-right asymmetry. Involved in regulating glial specification. The polypeptide is Helix-loop-helix protein ngn-1 (Caenorhabditis elegans).